We begin with the raw amino-acid sequence, 678 residues long: Photosystem I P700 chlorophyll a apoprotein A1 (678 aa).

A run of 8 helical transmembrane segments spans residues 75-98 (VFAANLAHIGVAFIWLSGMHFHGA), 152-175 (LKVIAAFGLIASALCFLGSYFHMH), 192-216 (STHHLVGLLGLGSLAWAGHLIHISL), 266-284 (SAMHHFALALVLIVGSVLG), 302-325 (WHLVLGVQLFVTGTASVLYAQMSN), 341-367 (VSLFVHHMWIGGFFLVGAFAHLSIGLV), 384-406 (IILGHLTWVVAFLGVHSFGLYVH), and 458-476 (FMVTHIHAFTIHTTVLILV). The [4Fe-4S] cluster site is built by Cys-500 and Cys-509. The next 2 membrane-spanning stretches (helical) occupy residues 516 to 537 (HVFLGLFWMYNSISVVIFHFFW) and 591 to 613 (LAAYGLTFPASHFVWALSLMFLF). His-602 contacts chlorophyll a'. The chlorophyll a site is built by Met-610 and Tyr-618. Position 619 (Trp-619) interacts with phylloquinone. The chain crosses the membrane as a helical span at residues 651-671 (AVGFTHYLLGGIGSTWSFFLA).

It belongs to the PsaA/PsaB family. The PsaA/B heterodimer binds the P700 chlorophyll special pair and subsequent electron acceptors. PSI consists of a core antenna complex that captures photons, and an electron transfer chain that converts photonic excitation into a charge separation. The eukaryotic PSI reaction center is composed of at least 11 subunits. The cofactor is P700 is a chlorophyll a/chlorophyll a' dimer, A0 is one or more chlorophyll a, A1 is one or both phylloquinones and FX is a shared 4Fe-4S iron-sulfur center..

It localises to the plastid. The protein resides in the chloroplast thylakoid membrane. The catalysed reaction is reduced [plastocyanin] + hnu + oxidized [2Fe-2S]-[ferredoxin] = oxidized [plastocyanin] + reduced [2Fe-2S]-[ferredoxin]. Its function is as follows. PsaA and PsaB bind P700, the primary electron donor of photosystem I (PSI), as well as the electron acceptors A0, A1 and FX. PSI is a plastocyanin/cytochrome c6-ferredoxin oxidoreductase, converting photonic excitation into a charge separation, which transfers an electron from the donor P700 chlorophyll pair to the spectroscopically characterized acceptors A0, A1, FX, FA and FB in turn. Oxidized P700 is reduced on the lumenal side of the thylakoid membrane by plastocyanin or cytochrome c6. The sequence is that of Photosystem I P700 chlorophyll a apoprotein A1 from Amphidinium carterae (Dinoflagellate).